Consider the following 211-residue polypeptide: ATP phosphoribosyltransferase (211 aa).

It belongs to the ATP phosphoribosyltransferase family. Short subfamily. Heteromultimer composed of HisG and HisZ subunits.

The protein localises to the cytoplasm. The catalysed reaction is 1-(5-phospho-beta-D-ribosyl)-ATP + diphosphate = 5-phospho-alpha-D-ribose 1-diphosphate + ATP. The protein operates within amino-acid biosynthesis; L-histidine biosynthesis; L-histidine from 5-phospho-alpha-D-ribose 1-diphosphate: step 1/9. Catalyzes the condensation of ATP and 5-phosphoribose 1-diphosphate to form N'-(5'-phosphoribosyl)-ATP (PR-ATP). Has a crucial role in the pathway because the rate of histidine biosynthesis seems to be controlled primarily by regulation of HisG enzymatic activity. The chain is ATP phosphoribosyltransferase from Pseudomonas putida (strain GB-1).